A 61-amino-acid polypeptide reads, in one-letter code: Opistoporin-4 (61 aa).

Positions 45–61 are excised as a propeptide; the sequence is EAGQMPFDEFMDILHYY.

Belongs to the non-disulfide-bridged peptide (NDBP) superfamily. Long chain multifunctional peptide (group 2) family. Expressed by the venom gland.

It is found in the secreted. The protein localises to the target cell membrane. At high concentrations, acts as a pore former in cellular membranes and causes the leakage of the cells. At submicromolar concentrations, degranulates granulocytes and has a weak hemolytic activity against human erythrocytes. Also strongly inhibits the production of superoxide anions. Has a strong antibacterial activity against Gram-negative bacteria but is less active against Gram-positive bacteria. Also has antifungal activity. In Opistophthalmus carinatus (African yellow leg scorpion), this protein is Opistoporin-4.